A 262-amino-acid chain; its full sequence is Putative non-heme bromoperoxidase BpoC (262 aa).

Residues R21, 87-88, and R120 each bind substrate; that span reads SM. S87 is a catalytic residue. Active-site residues include D211 and H239. H239 contributes to the substrate binding site.

The protein belongs to the AB hydrolase superfamily. As to quaternary structure, homodimer.

This chain is Putative non-heme bromoperoxidase BpoC (bpoC), found in Mycobacterium tuberculosis (strain CDC 1551 / Oshkosh).